Consider the following 866-residue polypeptide: Primer-independent DNA polymerase PolB (866 aa).

The tract at residues 50-286 is exonuclease domain; that stretch reads SDLTLHIGFD…DRVPATIGAM (237 aa). Residues 287 to 385 form a palm1 domain region; sequence AVSRFTKTLK…GLLDILTPDY (99 aa). Residues 386 to 481 are TPR1 domain; it reads GNIRLSKNPD…NSESTSVFLP (96 aa). The segment at 482 to 522 is fingers domain; sequence FVQQVRENRNRHIKGSLEEKFWKEIGNSLYGKLAQGLRAKT. A TPR2 domain region spans residues 523 to 549; it reads AFDTARGLNRSLPPSSVTQPFFAAHVT. The segment at 550–678 is palm2 domain; that stretch reads GFIRAVVGEL…PGQTLSRSTL (129 aa). A thumb domain region spans residues 679-866; that stretch reads ISTREMWLSE…RKYPTFCLPV (188 aa).

It depends on Mn(2+) as a cofactor.

It catalyses the reaction DNA(n) + a 2'-deoxyribonucleoside 5'-triphosphate = DNA(n+1) + diphosphate. DNA polymerase with primer-independent templated DNA polymerization activity, primer-dependent DNA polymerization activity with strand displacement, translesion synthesis activity across non-bulky base damage, 3'-5' exodeoxyribonuclease activity, and de novo primer synthesis activity. The enzyme is processive and faithful. Translation synthesis across abasic sites is coupled to de novo primer synthesis. Overexpression of wild-type protein increases survival of cells upon mitomycin C or UV treatment. The sequence is that of Primer-independent DNA polymerase PolB (pi-polB) from Escherichia coli.